The following is a 266-amino-acid chain: Putative deoxyribonuclease tatdn3 (266 aa).

Residues histidine 9, histidine 11, glutamate 103, histidine 143, histidine 166, and aspartate 214 each coordinate Zn(2+).

Belongs to the metallo-dependent hydrolases superfamily. TatD-type hydrolase family. Mn(2+) is required as a cofactor. Ca(2+) serves as cofactor. The cofactor is Mg(2+). It depends on Zn(2+) as a cofactor.

The protein localises to the nucleus. The 3'-exonuclease activity is sensitive to the metal ion present in the active site, whereas the AP endodeoxyribonuclease activity is observed in a variety of divalent metal cofactors. 3'-exoxonuclease activity is suppressed in the presence of Ca(2+), Zn(2+) and Ni(2+). Its function is as follows. Exhibits 3'-exonuclease activities and apurinic/apyrimidinic (AP) endonuclease (in vitro). Show preferential AP endonuclease activity on double-stranded DNA substrates and 3'- exonuclease activity on single-stranded DNA. In Danio rerio (Zebrafish), this protein is Putative deoxyribonuclease tatdn3 (tatdn3).